Consider the following 131-residue polypeptide: Small ribosomal subunit protein uS8 (131 aa).

Belongs to the universal ribosomal protein uS8 family. Part of the 30S ribosomal subunit. Contacts proteins S5 and S12.

Functionally, one of the primary rRNA binding proteins, it binds directly to 16S rRNA central domain where it helps coordinate assembly of the platform of the 30S subunit. The chain is Small ribosomal subunit protein uS8 from Dictyoglomus turgidum (strain DSM 6724 / Z-1310).